An 868-amino-acid polypeptide reads, in one-letter code: Receptor-like protein kinase At5g59670 (868 aa).

The first 22 residues, 1–22 (MESSFGLLLALLTLTIIHIVQA), serve as a signal peptide directing secretion. At 23–500 (QDPQGFISLD…PRLIKPPKKE (478 aa)) the chain is on the extracellular side. N-linked (GlcNAc...) asparagine glycans are attached at residues asparagine 38, asparagine 94, asparagine 141, asparagine 287, asparagine 300, asparagine 372, asparagine 405, asparagine 416, asparagine 423, asparagine 445, asparagine 464, and asparagine 471. LRR repeat units lie at residues 409–432 (PPRI…AIQS), 433–459 (ITQL…KMKS), and 461–481 (SVIN…LRKK). The chain crosses the membrane as a helical span at residues 501–521 (FPVAIVTLVVFVTVIVVLFLV). Residues 522–868 (FRKKMSTIVK…LDTTAVPMAR (347 aa)) are Cytoplasmic-facing. A Phosphothreonine modification is found at threonine 555. The Protein kinase domain maps to 564-834 (KNFQRVLGKG…SMSQVIHELK (271 aa)). ATP-binding positions include 570–578 (LGKGGFGMV) and lysine 592. Residue tyrosine 637 is modified to Phosphotyrosine. Aspartate 689 functions as the Proton acceptor in the catalytic mechanism. A Phosphoserine modification is found at serine 723. A phosphothreonine mark is found at threonine 724 and threonine 729.

This sequence belongs to the protein kinase superfamily. Ser/Thr protein kinase family. In terms of processing, autophosphorylated on Tyr and Thr residues.

It localises to the cell membrane. The enzyme catalyses L-seryl-[protein] + ATP = O-phospho-L-seryl-[protein] + ADP + H(+). It carries out the reaction L-threonyl-[protein] + ATP = O-phospho-L-threonyl-[protein] + ADP + H(+). It catalyses the reaction L-tyrosyl-[protein] + ATP = O-phospho-L-tyrosyl-[protein] + ADP + H(+). In terms of biological role, probable receptor with a dual specificity kinase activity acting on both serine/threonine- and tyrosine-containing substrates. This is Receptor-like protein kinase At5g59670 from Arabidopsis thaliana (Mouse-ear cress).